A 235-amino-acid chain; its full sequence is Zein-alpha PMS1 (235 aa).

A signal peptide spans Met-1 to Ala-21.

Belongs to the zein family.

Its function is as follows. Zeins are major seed storage proteins. The chain is Zein-alpha PMS1 (ZMPMS1) from Zea mays (Maize).